The sequence spans 111 residues: MAETILIETKTAGGNCRSYLMAGASYLGILCFVPLLMSRDDEYVYFHAKQGLVLWMWSILAMFALHLPGIGKWLFGFSSMGVLMLSVVGLVSVALRRTWRLPLISHVVALI.

Topologically, residues 1–17 are cytoplasmic; that stretch reads MAETILIETKTAGGNCR. A helical membrane pass occupies residues 18–38; the sequence is SYLMAGASYLGILCFVPLLMS. Topologically, residues 39–50 are lumenal; the sequence is RDDEYVYFHAKQ. The helical transmembrane segment at 51–71 threads the bilayer; sequence GLVLWMWSILAMFALHLPGIG. Lys-72 is a topological domain (cytoplasmic). The helical transmembrane segment at 73 to 93 threads the bilayer; sequence WLFGFSSMGVLMLSVVGLVSV. The Lumenal segment spans residues 94 to 111; the sequence is ALRRTWRLPLISHVVALI.

The protein belongs to the magnetosome MamF/MmsF protein family. In terms of assembly, may form homooligomers. Subject to cleavage or degradation; identified by N-terminal sequencing of proteins that are about 103, 92 and 15 kDa in size.

The protein resides in the magnetosome membrane. Functionally, plays a role in regulating magnetite crystal size; partially redundant function with MmsF. This chain is Magnetosome protein MamF, found in Magnetospirillum gryphiswaldense (strain DSM 6361 / JCM 21280 / NBRC 15271 / MSR-1).